Reading from the N-terminus, the 122-residue chain is MIQPQSYLNVADNSGARKIMCIRILGGSNKKYGHIGDTIIGVVKEAIPNMTLKKSEVVRAVIVRTCKELKRKNGTILRFDENAAVIINQEGNPRGTRIFGPVARELREANFTKIVSLAPEVL.

The protein belongs to the universal ribosomal protein uL14 family. As to quaternary structure, part of the 50S ribosomal subunit.

The protein resides in the plastid. The protein localises to the chloroplast. Binds to 23S rRNA. The sequence is that of Large ribosomal subunit protein uL14c from Chaetosphaeridium globosum (Charophycean green alga).